A 501-amino-acid chain; its full sequence is Putative antiporter subunit mnhD2 (501 aa).

A run of 14 helical transmembrane segments spans residues 4-24, 33-53, 79-99, 109-129, 131-151, 162-182, 207-227, 245-265, 274-294, 309-329, 334-354, 369-389, 409-429, and 452-472; these read SNLLILPLLLPAVCALGLVFI, IFSIGTMAVTTVVSLLLLIYV, LSLLLVTTSSFVVTLIMAYGF, YYLPSFILFLTVGVIGSFLTA, LFNIYVMFEVMLLASFVLITL, IIYVVLNILGSWLLLLGVGLL, IVIVSMVFLIAFSAKAALVLF, FAALMTKVGAYALIRFFTLIF, PLLVFLSCITMLIGAFGVLAY, IGFIILGLGTNTIAGVNGAIF, DIVVKTLLFFIIGSLVYITGL, FFGVAFVVMILAIGGVPPFSG, LALMIITSLIAMFSLFRIFFV, and NLIGVLVAMIIVMGLAAPLLF.

Belongs to the CPA3 antiporters (TC 2.A.63) subunit D family. May form a heterooligomeric complex that consists of seven subunits: mnhA2, mnhB2, mnhC2, mnhD2, mnhE2, mnhF2 and mnhG2.

It localises to the cell membrane. In Staphylococcus saprophyticus subsp. saprophyticus (strain ATCC 15305 / DSM 20229 / NCIMB 8711 / NCTC 7292 / S-41), this protein is Putative antiporter subunit mnhD2 (mnhD2).